The chain runs to 346 residues: Glycerol-1-phosphate dehydrogenase [NAD(P)+] (346 aa).

Residues G93 to D97 and T115 to S118 each bind NAD(+). Position 120 (D120) interacts with substrate. S124 lines the NAD(+) pocket. D167 provides a ligand contact to substrate. Residues D167 and H247 each coordinate Zn(2+). Residue H251 participates in substrate binding. Zn(2+) is bound at residue H263.

This sequence belongs to the glycerol-1-phosphate dehydrogenase family. Zn(2+) is required as a cofactor.

The protein resides in the cytoplasm. It carries out the reaction sn-glycerol 1-phosphate + NAD(+) = dihydroxyacetone phosphate + NADH + H(+). The catalysed reaction is sn-glycerol 1-phosphate + NADP(+) = dihydroxyacetone phosphate + NADPH + H(+). Its pathway is membrane lipid metabolism; glycerophospholipid metabolism. In terms of biological role, catalyzes the NAD(P)H-dependent reduction of dihydroxyacetonephosphate (DHAP or glycerone phosphate) to glycerol 1-phosphate (G1P). The G1P thus generated is used as the glycerophosphate backbone of phospholipids in the cellular membranes of Archaea. The sequence is that of Glycerol-1-phosphate dehydrogenase [NAD(P)+] from Pyrococcus horikoshii (strain ATCC 700860 / DSM 12428 / JCM 9974 / NBRC 100139 / OT-3).